Here is a 117-residue protein sequence, read N- to C-terminus: Glutamine-rich protein (117 aa).

A compositionally biased stretch (low complexity) spans 27–72; the sequence is RQQFQQQQQQQRQPQLQQQQQQQGIQQQPQGLQHQQQQFGLTQQHG. Residues 27 to 88 are disordered; it reads RQQFQQQQQQ…IVQPNPASQN (62 aa). The span at 75–87 shows a compositional bias: polar residues; that stretch reads RRQNIVQPNPASQ.

As to expression, component of the acid-soluble and acid-insoluble organic matrix of calcified shell layers (at protein level).

It is found in the secreted. In Haliotis asinina (Donkey's ear abalone), this protein is Glutamine-rich protein.